We begin with the raw amino-acid sequence, 318 residues long: HPr kinase/phosphorylase (318 aa).

Active-site residues include His-143 and Lys-164. 158–165 contacts ATP; that stretch reads GKSGVGKS. Residue Ser-165 coordinates Mg(2+). Asp-182 functions as the Proton acceptor; for phosphorylation activity. Proton donor; for dephosphorylation activity in the catalytic mechanism. Positions 206-215 are important for the catalytic mechanism of both phosphorylation and dephosphorylation; the sequence is MEIRGLGILN. Glu-207 lines the Mg(2+) pocket. Arg-248 is an active-site residue. Residues 269 to 274 are important for the catalytic mechanism of dephosphorylation; it reads PVKPGR.

Belongs to the HPrK/P family. Homohexamer. The cofactor is Mg(2+).

The enzyme catalyses [HPr protein]-L-serine + ATP = [HPr protein]-O-phospho-L-serine + ADP + H(+). It catalyses the reaction [HPr protein]-O-phospho-L-serine + phosphate + H(+) = [HPr protein]-L-serine + diphosphate. Catalyzes the ATP- as well as the pyrophosphate-dependent phosphorylation of a specific serine residue in HPr, a phosphocarrier protein of the phosphoenolpyruvate-dependent sugar phosphotransferase system (PTS). HprK/P also catalyzes the pyrophosphate-producing, inorganic phosphate-dependent dephosphorylation (phosphorolysis) of seryl-phosphorylated HPr (P-Ser-HPr). The sequence is that of HPr kinase/phosphorylase from Leptospira borgpetersenii serovar Hardjo-bovis (strain JB197).